Consider the following 103-residue polypeptide: Nucleoid-associated protein Adeh_3636 (103 aa).

The protein belongs to the YbaB/EbfC family. Homodimer.

The protein localises to the cytoplasm. It is found in the nucleoid. In terms of biological role, binds to DNA and alters its conformation. May be involved in regulation of gene expression, nucleoid organization and DNA protection. The polypeptide is Nucleoid-associated protein Adeh_3636 (Anaeromyxobacter dehalogenans (strain 2CP-C)).